The primary structure comprises 660 residues: UvrABC system protein B (660 aa).

Positions 25-183 (EGLNKGLKHQ…ALINIHYERN (159 aa)) constitute a Helicase ATP-binding domain. 38-45 (GVTGSGKT) contacts ATP. The short motif at 91–114 (YYDYYQPEAYLPTTDTYIEKDSSV) is the Beta-hairpin element. Positions 431–593 (QIDDLIGEVN…IVPQTIHKAL (163 aa)) constitute a Helicase C-terminal domain. A UVR domain is found at 622–657 (ADMVIELEAEMHLAAKNLEFERAAALRDNIKELRST).

This sequence belongs to the UvrB family. In terms of assembly, forms a heterotetramer with UvrA during the search for lesions. Interacts with UvrC in an incision complex.

The protein resides in the cytoplasm. The UvrABC repair system catalyzes the recognition and processing of DNA lesions. A damage recognition complex composed of 2 UvrA and 2 UvrB subunits scans DNA for abnormalities. Upon binding of the UvrA(2)B(2) complex to a putative damaged site, the DNA wraps around one UvrB monomer. DNA wrap is dependent on ATP binding by UvrB and probably causes local melting of the DNA helix, facilitating insertion of UvrB beta-hairpin between the DNA strands. Then UvrB probes one DNA strand for the presence of a lesion. If a lesion is found the UvrA subunits dissociate and the UvrB-DNA preincision complex is formed. This complex is subsequently bound by UvrC and the second UvrB is released. If no lesion is found, the DNA wraps around the other UvrB subunit that will check the other stand for damage. The protein is UvrABC system protein B of Methanococcoides burtonii (strain DSM 6242 / NBRC 107633 / OCM 468 / ACE-M).